Reading from the N-terminus, the 128-residue chain is Lutropin subunit beta (128 aa).

Disulfide bonds link cysteine 18-cysteine 66, cysteine 32-cysteine 81, cysteine 35-cysteine 119, cysteine 43-cysteine 97, cysteine 47-cysteine 99, and cysteine 102-cysteine 109. An N-linked (GlcNAc...) asparagine glycan is attached at asparagine 22.

This sequence belongs to the glycoprotein hormones subunit beta family. As to quaternary structure, heterodimer of a common alpha chain and a unique beta chain which confers biological specificity to thyrotropin, lutropin, follitropin and gonadotropin.

Its subcellular location is the secreted. In terms of biological role, promotes spermatogenesis and ovulation by stimulating the testes and ovaries to synthesize steroids. The polypeptide is Lutropin subunit beta (LHB) (Struthio camelus (Common ostrich)).